Consider the following 453-residue polypeptide: Glutamyl-tRNA(Gln) amidotransferase subunit A (453 aa).

Residues Lys-56 and Ser-131 each act as charge relay system in the active site. Ser-155 (acyl-ester intermediate) is an active-site residue.

This sequence belongs to the amidase family. GatA subfamily. In terms of assembly, heterotrimer of A, B and C subunits.

It catalyses the reaction L-glutamyl-tRNA(Gln) + L-glutamine + ATP + H2O = L-glutaminyl-tRNA(Gln) + L-glutamate + ADP + phosphate + H(+). Its function is as follows. Allows the formation of correctly charged Gln-tRNA(Gln) through the transamidation of misacylated Glu-tRNA(Gln) in organisms which lack glutaminyl-tRNA synthetase. The reaction takes place in the presence of glutamine and ATP through an activated gamma-phospho-Glu-tRNA(Gln). The chain is Glutamyl-tRNA(Gln) amidotransferase subunit A from Campylobacter jejuni subsp. jejuni serotype O:6 (strain 81116 / NCTC 11828).